A 206-amino-acid polypeptide reads, in one-letter code: Large ribosomal subunit protein uL4 (206 aa).

Belongs to the universal ribosomal protein uL4 family. As to quaternary structure, part of the 50S ribosomal subunit.

Functionally, one of the primary rRNA binding proteins, this protein initially binds near the 5'-end of the 23S rRNA. It is important during the early stages of 50S assembly. It makes multiple contacts with different domains of the 23S rRNA in the assembled 50S subunit and ribosome. In terms of biological role, forms part of the polypeptide exit tunnel. The polypeptide is Large ribosomal subunit protein uL4 (Nitrobacter hamburgensis (strain DSM 10229 / NCIMB 13809 / X14)).